We begin with the raw amino-acid sequence, 253 residues long: Hydroxyacylglutathione hydrolase (253 aa).

Residues His-59, His-61, Asp-63, His-64, His-118, Asp-143, and His-181 each contribute to the Zn(2+) site.

Belongs to the metallo-beta-lactamase superfamily. Glyoxalase II family. As to quaternary structure, monomer. It depends on Zn(2+) as a cofactor.

It catalyses the reaction an S-(2-hydroxyacyl)glutathione + H2O = a 2-hydroxy carboxylate + glutathione + H(+). It participates in secondary metabolite metabolism; methylglyoxal degradation; (R)-lactate from methylglyoxal: step 2/2. Functionally, thiolesterase that catalyzes the hydrolysis of S-D-lactoyl-glutathione to form glutathione and D-lactic acid. The sequence is that of Hydroxyacylglutathione hydrolase from Prochlorococcus marinus (strain SARG / CCMP1375 / SS120).